The sequence spans 30 residues: MKAIMVLFYVMTLTIIGSFSMLLQKAKERQ.

Positions 1 to 17 (MKAIMVLFYVMTLTIIG) are cleaved as a signal peptide.

Monomer. Expressed in venom sac and, to a lesser extent, in venom gland. Not expressed in brain.

It localises to the secreted. This chain is Ampulexin 3, found in Ampulex compressa (Emerald cockroach wasp).